A 233-amino-acid polypeptide reads, in one-letter code: Small ribosomal subunit protein uS2 (233 aa).

This sequence belongs to the universal ribosomal protein uS2 family.

This is Small ribosomal subunit protein uS2 from Clostridium acetobutylicum (strain ATCC 824 / DSM 792 / JCM 1419 / IAM 19013 / LMG 5710 / NBRC 13948 / NRRL B-527 / VKM B-1787 / 2291 / W).